A 207-amino-acid chain; its full sequence is MTDPEHSGQRAQVRGARFRERVLDATIACITEAGVDNVGFADVARKAGVNGVSLYRRWKTVPRLLIDALLTRTQAEVPIPDTGSVHRDLEIFATELTKFAQTPIGTALIRFTVVSADSPEVDVSRREFWMQRLTAAEEIIERGKNRGEVDSSTDSRLVVLTLGGLVHIYVTHLGTDIPTSLPHQAVSLILSGVTSGVTQARTNAQMG.

Residues 16–76 form the HTH tetR-type domain; the sequence is ARFRERVLDA…DALLTRTQAE (61 aa). The H-T-H motif DNA-binding region spans 39–58; it reads GFADVARKAGVNGVSLYRRW.

May regulate the expression of genes involved in the degradation of the Pseudomonas aeruginosa quorum sensing signal molecules HHQ (2-heptyl-4-quinolone) and PQS (2-heptyl-3-hydroxy-4-quinolone). The sequence is that of HTH-type transcriptional regulator AqdR from Rhodococcus erythropolis (Arthrobacter picolinophilus).